The following is a 373-amino-acid chain: CXADR-like membrane protein (373 aa).

The first 18 residues, 1–18, serve as a signal peptide directing secretion; it reads MSLLLLLLLVSYYVGTLG. Ig-like C2-type domains lie at 19 to 127 and 135 to 224; these read THTE…VILK and PKCE…VRVT. Residues 19–235 lie on the Extracellular side of the membrane; that stretch reads THTEIKRVAE…QYVQSIGMVA (217 aa). Intrachain disulfides connect Cys35/Cys111 and Cys153/Cys208. N-linked (GlcNAc...) asparagine glycosylation is found at Asn74 and Asn197. The helical transmembrane segment at 236-256 threads the bilayer; the sequence is GAVTGIVAGALLIFLLVWLLI. Residues 257–373 are Cytoplasmic-facing; sequence RRKDKERYEE…PSQSRAFQTV (117 aa). Residues 264 to 281 show a composition bias toward basic and acidic residues; the sequence is YEEEERPNEIREDAEAPK. Residues 264–373 form a disordered region; it reads YEEEERPNEI…PSQSRAFQTV (110 aa). Residues 288 to 314 show a composition bias toward low complexity; sequence SSSSSGSRSSRSGSSSTRSTANSASRS. Over residues 355–373 the composition is skewed to polar residues; sequence KAETTPSMIPSQSRAFQTV.

Predominantly expressed in epithelial cells within different tissues and in the white adipose tissue. Expressed at high levels in small intestine and placenta, at intermediate levels in the heart, skeletal muscle, colon, spleen, kidney and lung and at low levels in the liver and peripheral blood leukocytes. Highly abundant in the intestine during embryo and fetal development (at protein level).

The protein localises to the cell junction. It is found in the tight junction. The protein resides in the cell membrane. May be involved in the cell-cell adhesion. May play a role in adipocyte differentiation and development of obesity. Is required for normal small intestine development. This is CXADR-like membrane protein (CLMP) from Homo sapiens (Human).